The primary structure comprises 119 residues: Multi-drug resistance efflux pump PmrA homolog (119 aa).

Helical transmembrane passes span 1 to 20 (ILIGLVFTFVIYLPMAFVQS), 22 to 42 (LQLGILRFLLGFGAGALMPSV), 64 to 84 (MCSNLGMVTGPLVGSAIAGYI), and 88 to 108 (AAIVGTSLFVIVNIIWSFINF).

The protein belongs to the major facilitator superfamily.

The protein resides in the cell membrane. The polypeptide is Multi-drug resistance efflux pump PmrA homolog (pmrA) (Lactococcus lactis subsp. cremoris (Streptococcus cremoris)).